Consider the following 1581-residue polypeptide: MPLAFCGSENHSAAYRVDQGVLNNGCFVDALNVVPHVFLLFITFPILFIGWGSQSSKVHIHHSTWLHFPGHNLRWILTFMLLFVLVCEIAEGILSDGVTESHHLHLYMPAGMAFMAAVTSVVYYHNIETSNFPKLLIALLVYWTLAFITKTIKFVKFLDHAIGFSQLRFCLTGLLVILYGMLLLVEVNVIRVRRYIFFKTPREVKPPEDLQDLGVRFLQPFVNLLSKGTYWWMNAFIKTAHKKPIDLRAIGKLPIAMRALTNYQRLCEAFDAQVRKDIQGTQGARAIWQALSHAFGRRLVLSSTFRILADLLGFAGPLCIFGIVDHLGKENDVFQPKTQFLGVYFVSSQEFLANAYVLAVLLFLALLLQRTFLQASYYVAIETGINLRGAIQTKIYNKIMHLSTSNLSMGEMTAGQICNLVAIDTNQLMWFFFLCPNLWAMPVQIIVGVILLYYILGVSALIGAAVIILLAPVQYFVATKLSQAQRSTLEYSNERLKQTNEMLRGIKLLKLYAWENIFRTRVETTRRKEMTSLRAFAIYTSISIFMNTAIPIAAVLITFVGHVSFFKEADFSPSVAFASLSLFHILVTPLFLLSSVVRSTVKALVSVQKLSEFLSSAEIREEQCAPHEPTPQGPASKYQAVPLRVVNRKRPAREDCRGLTGPLQSLVPSADGDADNCCVQIMGGYFTWTPDGIPTLSNITIRIPRGQLTMIVGQVGCGKSSLLLAALGEMQKVSGAVFWSSLPDSEIGEDPSPERETATDLDIRKRGPVAYASQKPWLLNATVEENIIFESPFNKQRYKMVIEACSLQPDIDILPHGDQTQIGERGINLSGGQRQRISVARALYQHANVVFLDDPFSALDIHLSDHLMQAGILELLRDDKRTVVLVTHKLQYLPHADWIIAMKDGTIQREGTLKDFQRSECQLFEHWKTLMNRQDQELEKETVTERKATEPPQGLSRAMSSRDGLLQDEEEEEEEAAESEEDDNLSSMLHQRAEIPWRACAKYLSSAGILLLSLLVFSQLLKHMVLVAIDYWLAKWTDSALTLTPAARNCSLSQECTLDQTVYAMVFTVLCSLGIVLCLVTSVTVEWTGLKVAKRLHRSLLNRIILAPMRFFETTPLGSILNRFSSDCNTIDQHIPSTLECLSRSTLLCVSALAVISYVTPVFLVALLPLAIVCYFIQKYFRVASRDLQQLDDTTQLPLLSHFAETVEGLTTIRAFRYEARFQQKLLEYTDSNNIASLFLTAANRWLEVRMEYIGACVVLIAAVTSISNSLHRELSAGLVGLGLTYALMVSNYLNWMVRNLADMELQLGAVKRIHGLLKTEAESYEGLLAPSLIPKNWPDQGKIQIQNLSVRYDSSLKPVLKHVNALIAPGQKIGICGRTGSGKSSFSLAFFRMVDTFEGHIIIDGIDIAKLPLHTLRSRLSIILQDPVLFSGTIRFNLDPERKCSDSTLWEALEIAQLKLVVKALPGGLDAIITEGGENFSQGQRQLFCLARAFVRKTSIFIMDEATASIDMATENILQKVVMTAFADRTVVTIAHRVHTILSADLVIVLKRGAILEFDKPEKLLSRKDSVFASFVRADK.

The Extracellular portion of the chain corresponds to 1-30 (MPLAFCGSENHSAAYRVDQGVLNNGCFVDA). A disulfide bridge connects residues Cys-6 and Cys-26. An N-linked (GlcNAc...) asparagine glycan is attached at Asn-10. A helical membrane pass occupies residues 31–47 (LNVVPHVFLLFITFPIL). Residues 48 to 72 (FIGWGSQSSKVHIHHSTWLHFPGHN) are Cytoplasmic-facing. A helical transmembrane segment spans residues 73 to 89 (LRWILTFMLLFVLVCEI). The Extracellular segment spans residues 90–106 (AEGILSDGVTESHHLHL). The helical transmembrane segment at 107-123 (YMPAGMAFMAAVTSVVY) threads the bilayer. Residues 124–136 (YHNIETSNFPKLL) lie on the Cytoplasmic side of the membrane. Residues 137 to 153 (IALLVYWTLAFITKTIK) traverse the membrane as a helical segment. The Extracellular segment spans residues 154 to 169 (FVKFLDHAIGFSQLRF). The chain crosses the membrane as a helical span at residues 170–186 (CLTGLLVILYGMLLLVE). Residues 187–303 (VNVIRVRRYI…AFGRRLVLSS (117 aa)) are Cytoplasmic-facing. The ABC transmembrane type-1 1 domain occupies 299-602 (LVLSSTFRIL…LSSVVRSTVK (304 aa)). The chain crosses the membrane as a helical span at residues 304-319 (TFRILADLLGFAGPLC). The Extracellular portion of the chain corresponds to 320-356 (IFGIVDHLGKENDVFQPKTQFLGVYFVSSQEFLANAY). A helical transmembrane segment spans residues 357–372 (VLAVLLFLALLLQRTF). The Cytoplasmic portion of the chain corresponds to 373–438 (LQASYYVAIE…MWFFFLCPNL (66 aa)). The chain crosses the membrane as a helical span at residues 439-454 (WAMPVQIIVGVILLYY). Topologically, residues 455–460 (ILGVSA) are extracellular. The chain crosses the membrane as a helical span at residues 461-473 (LIGAAVIILLAPV). At 474–541 (QYFVATKLSQ…SLRAFAIYTS (68 aa)) the chain is on the cytoplasmic side. Residues 542 to 557 (ISIFMNTAIPIAAVLI) traverse the membrane as a helical segment. At 558 to 576 (TFVGHVSFFKEADFSPSVA) the chain is on the extracellular side. The helical transmembrane segment at 577-592 (FASLSLFHILVTPLFL) threads the bilayer. The Cytoplasmic segment spans residues 593–1012 (LSSVVRSTVK…YLSSAGILLL (420 aa)). The region spanning 679–929 (VQIMGGYFTW…ECQLFEHWKT (251 aa)) is the ABC transporter 1 domain. ATP is bound by residues Trp-688, Gly-716, Ser-720, and Ser-721. Position 720 (Ser-720) interacts with Mg(2+). Gln-774 is a binding site for Mg(2+). The segment covering 935 to 949 (DQELEKETVTERKAT) has biased composition (basic and acidic residues). The tract at residues 935–987 (DQELEKETVTERKATEPPQGLSRAMSSRDGLLQDEEEEEEEAAESEEDDNLSS) is disordered. A compositionally biased stretch (acidic residues) spans 966 to 984 (LQDEEEEEEEAAESEEDDN). Positions 1012-1306 (LSLLVFSQLL…MVRNLADMEL (295 aa)) constitute an ABC transmembrane type-1 2 domain. The chain crosses the membrane as a helical span at residues 1013 to 1030 (SLLVFSQLLKHMVLVAID). Topologically, residues 1031 to 1066 (YWLAKWTDSALTLTPAARNCSLSQECTLDQTVYAMV) are extracellular. Asn-1049 is a glycosylation site (N-linked (GlcNAc...) asparagine). The chain crosses the membrane as a helical span at residues 1067–1083 (FTVLCSLGIVLCLVTSV). Over 1084-1142 (TVEWTGLKVAKRLHRSLLNRIILAPMRFFETTPLGSILNRFSSDCNTIDQHIPSTLECL) the chain is Cytoplasmic. The chain crosses the membrane as a helical span at residues 1143–1160 (SRSTLLCVSALAVISYVT). Position 1161 (Pro-1161) is a topological domain, extracellular. A helical transmembrane segment spans residues 1162 to 1174 (VFLVALLPLAIVC). The Cytoplasmic segment spans residues 1175–1248 (YFIQKYFRVA…FLTAANRWLE (74 aa)). Residues 1249–1264 (VRMEYIGACVVLIAAV) form a helical membrane-spanning segment. Residues 1265 to 1280 (TSISNSLHRELSAGLV) are Extracellular-facing. The helical transmembrane segment at 1281–1296 (GLGLTYALMVSNYLNW) threads the bilayer. Residues 1297–1581 (MVRNLADMEL…VFASFVRADK (285 aa)) lie on the Cytoplasmic side of the membrane. One can recognise an ABC transporter 2 domain in the interval 1344 to 1578 (IQIQNLSVRY…KDSVFASFVR (235 aa)). Residues Thr-1380, Gly-1381, Gly-1383, Lys-1384, Ser-1385, and Ser-1386 each contribute to the ADP site. Ser-1482 is a binding site for ATP.

The protein belongs to the ABC transporter superfamily. ABCC family. Conjugate transporter (TC 3.A.1.208) subfamily. As to quaternary structure, forms an heterooctamer with KCNJ11; four ABCC8/SUR1 molecules interact with one KCNJ11 homotetramer.

The protein resides in the cell membrane. Its activity is regulated as follows. KATP channels are regulated by cytoplasmic ATP/ADP ratios; ATP inhibits the channel by closing the pore, while ADP activates the channel. Activated by phosphatidylinositol 4,5-biphosphate (PtdIns(4,5)P2). In terms of biological role, regulator subunit of pancreatic ATP-sensitive potassium channel (KATP), playing a major role in the regulation of insulin release. In pancreatic cells, it forms KATP channels with KCNJ11; KCNJ11 forms the channel pore while ABCC8 is required for activation and regulation. The protein is ATP-binding cassette sub-family C member 8 (ABCC8) of Homo sapiens (Human).